A 238-amino-acid polypeptide reads, in one-letter code: 4-hydroxy-tetrahydrodipicolinate reductase (238 aa).

NAD(+) is bound at residue glycine 12–methionine 17. NADP(+) is bound at residue arginine 40. Residues glycine 93–threonine 95 and alanine 117–phenylalanine 120 contribute to the NAD(+) site. The active-site Proton donor/acceptor is the histidine 149. (S)-2,3,4,5-tetrahydrodipicolinate is bound at residue histidine 150. Catalysis depends on lysine 153, which acts as the Proton donor. Glycine 159–threonine 160 contacts (S)-2,3,4,5-tetrahydrodipicolinate.

This sequence belongs to the DapB family.

The protein resides in the cytoplasm. The catalysed reaction is (S)-2,3,4,5-tetrahydrodipicolinate + NAD(+) + H2O = (2S,4S)-4-hydroxy-2,3,4,5-tetrahydrodipicolinate + NADH + H(+). The enzyme catalyses (S)-2,3,4,5-tetrahydrodipicolinate + NADP(+) + H2O = (2S,4S)-4-hydroxy-2,3,4,5-tetrahydrodipicolinate + NADPH + H(+). It participates in amino-acid biosynthesis; L-lysine biosynthesis via DAP pathway; (S)-tetrahydrodipicolinate from L-aspartate: step 4/4. Functionally, catalyzes the conversion of 4-hydroxy-tetrahydrodipicolinate (HTPA) to tetrahydrodipicolinate. This Xanthomonas euvesicatoria pv. vesicatoria (strain 85-10) (Xanthomonas campestris pv. vesicatoria) protein is 4-hydroxy-tetrahydrodipicolinate reductase.